A 554-amino-acid polypeptide reads, in one-letter code: L-ascorbate oxidase homolog (554 aa).

The signal sequence occupies residues 1–21 (MGSGKVTFVALLLCLSVGVIA). Plastocyanin-like domains are found at residues 22 to 143 (EDPY…LNVH) and 196 to 296 (SAKV…AIIR). N-linked (GlcNAc...) asparagine glycans are attached at residues Asn-31, Asn-59, and Asn-108. An intrachain disulfide couples Cys-101 to Cys-540. Residues Asn-332, Asn-352, and Asn-423 are each glycosylated (N-linked (GlcNAc...) asparagine). Residues 411–521 (DPSKLTIATN…LGEQLYFSVL (111 aa)) enclose the Plastocyanin-like 3 domain.

The protein belongs to the multicopper oxidase family. As to expression, pollen.

Its subcellular location is the secreted. It localises to the extracellular space. Probable oxidoreductase that may be involved in pollen tube growth. This Nicotiana tabacum (Common tobacco) protein is L-ascorbate oxidase homolog.